Here is a 105-residue protein sequence, read N- to C-terminus: Thioredoxin-like protein slr0233 (105 aa).

A Thioredoxin domain is found at 1-102 (MAVKKQFANF…QAAQLIQQLQ (102 aa)). Cysteine 30 and cysteine 33 are joined by a disulfide.

The protein belongs to the thioredoxin family.

This is Thioredoxin-like protein slr0233 from Synechocystis sp. (strain ATCC 27184 / PCC 6803 / Kazusa).